We begin with the raw amino-acid sequence, 393 residues long: Tryptophan 2,3-dioxygenase (393 aa).

Residues 56–60 (FIVTH) and Arg127 each bind substrate. A heme-binding site is contributed by His312. Position 327 (Thr327) interacts with substrate.

Belongs to the tryptophan 2,3-dioxygenase family. In terms of assembly, homotetramer. Dimer of dimers. It depends on heme as a cofactor.

It carries out the reaction L-tryptophan + O2 = N-formyl-L-kynurenine. The protein operates within amino-acid degradation; L-tryptophan degradation via kynurenine pathway; L-kynurenine from L-tryptophan: step 1/2. It participates in pigment biosynthesis; ommochrome biosynthesis. Stimulated by low concentrations of hydrogen peroxide (5 uM), ascorbate (0.1-0.3 mM), and sodium hydrosulfite (0.1 mM). Inhibited by high concentrations of hydrogen peroxide (0.1 mM), ascorbate (10 mM), and sodium hydrosulfite (1 mM). Its function is as follows. Heme-dependent dioxygenase that catalyzes the oxidative cleavage of the L-tryptophan (L-Trp) pyrrole ring and converts L-tryptophan to N-formyl-L-kynurenine. Catalyzes the oxidative cleavage of the indole moiety. This chain is Tryptophan 2,3-dioxygenase, found in Aedes aegypti (Yellowfever mosquito).